Here is a 636-residue protein sequence, read N- to C-terminus: Chaperone protein DnaK (636 aa).

Threonine 198 is subject to Phosphothreonine; by autocatalysis. The tract at residues 600-636 is disordered; the sequence is IAQQQAQAQQGSAEAGAQSQEDDVVDAEFEEVKDDKK. Over residues 601-618 the composition is skewed to low complexity; sequence AQQQAQAQQGSAEAGAQS. Residues 619–636 show a composition bias toward acidic residues; the sequence is QEDDVVDAEFEEVKDDKK.

This sequence belongs to the heat shock protein 70 family.

Functionally, acts as a chaperone. The sequence is that of Chaperone protein DnaK from Vibrio vulnificus (strain CMCP6).